The sequence spans 509 residues: Phytase A (509 aa).

The first 15 residues, 1-15 (MFLLMVPLFSYLAAA), serve as a signal peptide directing secretion. Cys27 and Cys36 are joined by a disulfide. The 1D-myo-inositol hexakisphosphate site is built by Gln46, Tyr47, Arg75, His76, Arg79, Thr82, and Arg164. Intrachain disulfides connect Cys65/Cys444, Cys216/Cys507, Cys266/Cys295, and Cys478/Cys486. The active-site Nucleophile is His76. Residues Asn171 and Asn208 are each glycosylated (N-linked (GlcNAc...) asparagine). Lys314 is a binding site for 1D-myo-inositol hexakisphosphate. 3 N-linked (GlcNAc...) asparagine glycosylation sites follow: Asn348, Asn352, and Asn367. 1D-myo-inositol hexakisphosphate-binding residues include His376 and Asp377. Residue Asn401 is glycosylated (N-linked (GlcNAc...) asparagine).

It belongs to the histidine acid phosphatase family. Monomer.

The protein resides in the secreted. It catalyses the reaction 1D-myo-inositol hexakisphosphate + H2O = 1D-myo-inositol 1,2,4,5,6-pentakisphosphate + phosphate. It carries out the reaction 1D-myo-inositol 1,2,4,5,6-pentakisphosphate + H2O = 1D-myo-inositol 1,2,5,6-tetrakisphosphate + phosphate. The enzyme catalyses 1D-myo-inositol 1,2,5,6-tetrakisphosphate + H2O = 1D-myo-inositol 1,2,6-trisphosphate + phosphate. The catalysed reaction is 1D-myo-inositol 1,2,6-trisphosphate + H2O = 1D-myo-inositol 1,2-bisphosphate + phosphate. It catalyses the reaction 1D-myo-inositol 1,2-bisphosphate + H2O = 1D-myo-inositol 2-phosphate + phosphate. In terms of biological role, catalyzes the phosphate monoester hydrolysis of phytic acid (myo-inositol hexakisphosphate), which results in the stepwise formation of myo-inositol pentakis-, tetrakis-, tris-, bis-, and monophosphates, as well as the liberation of inorganic phosphate. Myo-inositol 2-monophosphate is the end product. Is also able to dephosphorylate the classic acid phosphatase substrate p-nitrophenyl phosphate. This is Phytase A (pht-1) from Neurospora crassa (strain ATCC 24698 / 74-OR23-1A / CBS 708.71 / DSM 1257 / FGSC 987).